The following is a 670-amino-acid chain: Septation protein 7 (670 aa).

The 325-residue stretch at 33-357 folds into the Septin-type G domain; that stretch reads KGIKFTFMVV…ETYRTERLTK (325 aa). Residues 43–50 form a G1 motif region; it reads GESGTGKT. GTP-binding positions include 43 to 50, Gly-137, 217 to 225, and Arg-306; these read GESGTGKT and KADSFTLNE. The tract at residues 134–137 is G3 motif; it reads DTPG. A G4 motif region spans residues 216–219; the sequence is GKAD. Disordered regions lie at residues 383–513 and 574–670; these read LNDS…QRNQ and LNRQ…VSNH. Residues 395–404 show a composition bias toward low complexity; the sequence is NNNNNNNNNN. Residues 405–421 show a composition bias toward polar residues; it reads ASTIPSMSNLAQLTTST. Low complexity-rich tracts occupy residues 433–446 and 463–473; these read SITS…KSTS and SSFTSSTSTVS. Positions 472–606 form a coiled coil; it reads VSLEGGEKEG…SVQSGGVDDG (135 aa). Positions 476–487 are enriched in basic and acidic residues; that stretch reads GGEKEGGHHDRG. Residues 489–500 show a composition bias toward low complexity; sequence NSTSTNNNNNNN. Residues 631–645 are compositionally biased toward basic and acidic residues; the sequence is QSHEYDNSEYHHDDS.

It belongs to the TRAFAC class TrmE-Era-EngA-EngB-Septin-like GTPase superfamily. Septin GTPase family. In terms of assembly, component of the septin complex which consists of CDC3, CDC10, CDC11, CDC12 and probably SEP7. The purified septin complex appeared to have a stoichiometry of 2 CDC3, 1 to 2 CDC10, 1 CDC11, 2 CDC12, and 1 or none SEP7 subunit. Induction of hyphal growth brings about important modifications in septin ring dynamics, because the rings were found in a different state from those of yeast cells. This hyphal-specific state contains a core of stable septins (SEP7, CDC3, and CDC12), and it shows a high CDC10 turnover between the ring and the cytoplasm. Interacts with GIN4. In terms of processing, phosphorylated by GIN4 which stabilizes the GIN4-SEP7 interaction.

Its subcellular location is the bud neck. In terms of biological role, septins are GTPases involved in cytokinesis that assemble early in the cell cycle as a patch at the incipient bud site and form a ring before bud emergence, which transforms into an hour-glass shaped collar of cortical filaments that spans both sides of the mother-bud neck. This collar persists until just before cytokinesis, when it splits into two rings that occupy opposite sides of the neck. The septins at the bud neck serve as a structural scaffold that recruits different components involved in diverse processes at specific stages during the cell cycle. Many proteins bind asymmetrically to the septin collar. The septin assembly is regulated by protein kinase GIN4. Septins are also involved in cell morphogenesis, chlamydospores morphogenesis, bud site selection, chitin deposition, cell cycle regulation, cell compartmentalization and spore wall formation. SEP7 is required to convert hyphal septin rings into the hyphal-specific state and is necessary for CDC10 turnover during hyphal growth. In Candida albicans (strain SC5314 / ATCC MYA-2876) (Yeast), this protein is Septation protein 7 (SEP7).